The primary structure comprises 118 residues: MARIAGVNIPDNKHAVISLTYIFGVGRHTAKSILAAVGIGPTTKIRELDDAQLDAIRAEVAKVPTEGDLRREISMNIKRLMDLGCYRGLRHRRSLPVRGQRTKTNARTRKGPRKPIKK.

The segment at 92 to 118 is disordered; the sequence is RRSLPVRGQRTKTNARTRKGPRKPIKK.

It belongs to the universal ribosomal protein uS13 family. As to quaternary structure, part of the 30S ribosomal subunit. Forms a loose heterodimer with protein S19. Forms two bridges to the 50S subunit in the 70S ribosome.

Located at the top of the head of the 30S subunit, it contacts several helices of the 16S rRNA. In the 70S ribosome it contacts the 23S rRNA (bridge B1a) and protein L5 of the 50S subunit (bridge B1b), connecting the 2 subunits; these bridges are implicated in subunit movement. Contacts the tRNAs in the A and P-sites. This Acinetobacter baylyi (strain ATCC 33305 / BD413 / ADP1) protein is Small ribosomal subunit protein uS13.